Reading from the N-terminus, the 370-residue chain is MPPSDPIIVLGAGVIGLTTAVRLLEAHLGANVHILADHWPSDALDAQYASTIAGAHHLSFADDGDARQRRWDMRTFDVLYDEWKAVGERTGLMALTQTEMWEGATSHLAVYEGNPDFRVLDPRTAPCSNITHMVSFTSLTIAPTVYLAALEARVRDLGAKLHRAHVPSLGALRTDPALLALYTRPPAAVFVCAGLGARHLVPAPEAAALFPTRGQVVVVRAPWMRAGFTRQVGSLGGGEGGTRTYIIPRCNGEVVLGGTMEQGDWTPYPRDETVTDILTRALQICPDIAPPYARSWPKDDQVAALRSIVVRDAVGFRPSRAGGARVALASAAGMRVVYNYGHGGAGWQSCWGCAEDAVALWAGGAGGARL.

Residues I15, A49, S50, G54, V166, R317, G346, and Q348 each contribute to the FAD site. A Microbody targeting signal motif is present at residues 368 to 370; sequence ARL.

This sequence belongs to the DAMOX/DASOX family. In terms of assembly, homotetramer. FAD serves as cofactor.

It is found in the peroxisome matrix. The catalysed reaction is D-aspartate + O2 + H2O = oxaloacetate + H2O2 + NH4(+). It catalyses the reaction D-glutamate + O2 + H2O = H2O2 + 2-oxoglutarate + NH4(+). Inhibited by malonate and D-malate. Very mildly inhibited by benzoate, ethylenediaminetetraacetic acid (EDTA), crotonate and anthranilate. May be very mildly inhibited by meso-tartrate. Selectively catalyzes the oxidative deamination of acidic amino acids. Protects the organism from the toxicity of D-amino acids. Enables the organism to utilize D-amino acids as a source of nutrients. Enables the organism to utilize D-aspartate as a source of nitrogen and carbon. This chain is D-aspartate oxidase, found in Vanrija humicola (Yeast).